Here is a 242-residue protein sequence, read N- to C-terminus: Cysteine-rich venom protein helothermine (242 aa).

An N-terminal signal peptide occupies residues 1-19 (MILLSLYLCLAAMLHQSEG). An SCP domain is found at 41–169 (DKHNNLRRIV…TYKYYQVCQY (129 aa)). Cystine bridges form between cysteine 77–cysteine 155, cysteine 94–cysteine 170, cysteine 150–cysteine 167, cysteine 189–cysteine 196, cysteine 192–cysteine 201, cysteine 205–cysteine 237, cysteine 214–cysteine 231, and cysteine 223–cysteine 235. Residues 205 to 237 (CKQNDVYNNCPDLKKQVGCGHPIMKDCMATCKC) form the ShKT domain.

The protein belongs to the CRISP family. In terms of tissue distribution, expressed by the venom gland.

Its subcellular location is the secreted. In terms of biological role, alters a variety of ion channel activities, including voltage-gated potassium channels (Kv), voltage-gated calcium channels (L-, N-, and P-type) (Cav) and ryanodine receptors (RyR). Is toxic to mice (causes lethargy, partial paralysis of rear limbs and lowering of body temperature). The protein is Cysteine-rich venom protein helothermine of Heloderma horridum horridum (Mexican beaded lizard).